The following is a 1028-amino-acid chain: MRLLWKLVILLPLINSCAGEGRFSRPIFIQEPQDVIFPLDLSRSEIILTCTANGYPSPHYRWKQNGTDIDFGMTYHYRLDGGSLAISSPRTDQDIGIYQCLATNPVGTILSRKAKLQFAYIEDFETKTRSTVSVREGQGVVLLCGPPPHFGELSYAWTFNDSPLYVQEDKRRFVSQDTGNLYFAKVEPSDVGNYTCFVTNKEAHRSVQGPPTPLVLRTDGVMGEYEPKIEVRFPETIQAAKDSSIKLECFALGNPVPDISWKRLDGSPMPGKIKYSKSQAILEIPKFQQEDEGFYECIAGNLRGRNLAKGQLIFYAPPEWEQKIQNTYLSIYDSLFWECKASGNPNPSYTWLKNGQRLNTEERIQIENGTLIITMLNISDSGIYQCAAENKYQTIYANAELRVLASAPDFSKNPIKKISVVQVGGDISIECKPNAFPKASISWKRGTENLKQSKRVLFLEDGSLKICNVTRADAGSYTCVATNQFGNGKSSGGLVVKERTIITVPPSKMDVTVGESIVLPCQVSHDPTMEVLFVWYFNGDIIDLKKGVAHFERIGGESVGDLMIRNIQLGHSGKYLCTVQTTLERLSAVADIIVRGPPGPPEDVKVEHISSTTSQLSWRPGPDNNSPIQIFTIQTRTPFSVGWQAVATVPEILNGQTYNATVVGLSPWVEYEFRVVAGNNIGIGEPSKPSELLRTKASVPNVAPGNINGGGGSRSELVITWEAIPEELQNGEGFGYIVMFRPVGTTAWMKERVALVESSKFIYRNESIMPLSPFEVKVGVYNNEGEGSLSTVTIVYSGEDEPQLAPRGTSVQSFSASEMEVSWNAIAWNRNTGRVLGYEVLYWTDNSKESMIGKIRVSGNVTTKNITGLRANTIYFASVRAYNTAGTGPSSLPVNVTTKKSPPSQPPANIAWKLSNSKLCLNWEHVKTMENESEVLGYKILYRQNRQSKTHILETNNTSAELLVPFEEDYLIEIRTVSDGGDGSSSEEIRIPKMSSLSSTGVQISKPSTQSLSMVGVFYCFAIHPLSR.

The signal sequence occupies residues 1–19 (MRLLWKLVILLPLINSCAG). Ig-like C2-type domains lie at 32-117 (PQDV…AKLQ), 122-208 (EDFE…RSVQ), 227-308 (PKIE…RNLA), 318-402 (PEWE…AELR), 408-502 (PDFS…RTII), and 500-587 (TIIT…ERLS). Cystine bridges form between C50/C100, C144/C196, C249/C297, C339/C386, C431/C479, and C521/C577. Residues N65 and N193 are each glycosylated (N-linked (GlcNAc...) asparagine). N-linked (GlcNAc...) asparagine glycans are attached at residues N368, N377, and N468. 4 Fibronectin type-III domains span residues 600-698 (PPED…TKAS), 703-800 (APGN…SGED), 805-901 (APRG…TKKS), and 902-996 (PPSQ…KMSS). N-linked (GlcNAc...) asparagine glycans are attached at residues N659, N765, N860, and N865. Y882 carries the phosphotyrosine modification. N895, N931, N956, and N957 each carry an N-linked (GlcNAc...) asparagine glycan. The GPI-anchor amidated serine moiety is linked to residue S999. Residues 1000–1028 (TGVQISKPSTQSLSMVGVFYCFAIHPLSR) constitute a propeptide, removed in mature form.

It belongs to the immunoglobulin superfamily. Contactin family. In terms of assembly, interacts with PTPRG. As to expression, expressed in brain. In brain, it is preferentially expressed in the accessory olfactory bulb, layers II/III and V of the cerebral cortex, piriform cortex, anterior thalamic nuclei, locus coeruleus of the pons and mesencephalic trigeminal nucleus and in Purkinje cells of the cerebellum.

The protein resides in the cell membrane. Its function is as follows. Contactins mediate cell surface interactions during nervous system development. Participates in oligodendrocytes generation by acting as a ligand of NOTCH1. Its association with NOTCH1 promotes NOTCH1 activation through the released notch intracellular domain (NICD) and subsequent translocation to the nucleus. Involved in motor coordination. The protein is Contactin-6 (Cntn6) of Mus musculus (Mouse).